The chain runs to 482 residues: MASNLVEMFNAALNWVTMILESPSARVVLFGVPIRGHFFVEGLLGVVIIILLTRKSYKPPKRPLTEQEIDELCDEWVPEPLIPPITEDMKHEPPVLESAAGPHTTVNGKDVVNFASANYLGLIGHEKLLESCTSALEKYGVGSCGPRGFYGTIDVHLDCETRISKFLGTPDSILYSYGLSTMFSTIPCFCKKGDVIVADEGVHWGIQNGLQLSRSTIVYFKHNDMESLRITLEKIMTKYKRSKNLRRYIVAEAVYQNSGQIAPLDEIVKLKEKYRFRVILDESNSFGVLGRSGRGLAEHHSVPIEKIDVVTAAMGHALATEGGFCTGNARIIDYQRLSSSGYVFSASLPPYLASAAITAIDVIDQNPDMLVKLKQNVALLWKGLSDIKGMSLTSNRESPIVFLKLEKSSGSAKDDLLLLEKMADRALKEDSLLVVSSKRSFLDKCRLPVGIKLYVSAGHSESDLLKASESLKRLASELLLKS.

A helical transmembrane segment spans residues Val32–Leu52.

It belongs to the class-II pyridoxal-phosphate-dependent aminotransferase family. Heterodimer with LCB2 (LCB2a or LCB2b). Component of the serine palmitoyltransferase (SPT) complex, composed of LCB1 and LCB2 (LCB2a or LCB2b). The cofactor is pyridoxal 5'-phosphate. Ubiquitous.

It localises to the endoplasmic reticulum membrane. The catalysed reaction is L-serine + hexadecanoyl-CoA + H(+) = 3-oxosphinganine + CO2 + CoA. Its pathway is lipid metabolism; sphingolipid metabolism. Its function is as follows. Component of serine palmitoyltransferase (SPT), which catalyzes the committed step in the synthesis of sphingolipids, the condensation of serine with palmitoyl CoA to form the long chain base 3-ketosphinganine. The heterodimer formed with LCB2 constitutes the catalytic core. Involved in the regulation of the programmed cell death (PCD) signaling pathway. Plays an important role during male gametogenesis and embryogenesis. The protein is Long chain base biosynthesis protein 1 (LCB1) of Arabidopsis thaliana (Mouse-ear cress).